A 188-amino-acid polypeptide reads, in one-letter code: Large ribosomal subunit protein eL18 (188 aa).

A Glycyl lysine isopeptide (Lys-Gly) (interchain with G-Cter in SUMO2) cross-link involves residue lysine 119. Serine 130 carries the post-translational modification Phosphoserine. The segment at histidine 151–asparagine 188 is disordered. Threonine 158 bears the Phosphothreonine mark. Composition is skewed to basic residues over residues serine 161–glycine 171 and arginine 178–asparagine 188. Lysine 164 participates in a covalent cross-link: Glycyl lysine isopeptide (Lys-Gly) (interchain with G-Cter in SUMO2).

The protein belongs to the eukaryotic ribosomal protein eL18 family. As to quaternary structure, component of the large ribosomal subunit.

The protein resides in the cytoplasm. It is found in the cytosol. The protein localises to the rough endoplasmic reticulum. Component of the large ribosomal subunit. The ribosome is a large ribonucleoprotein complex responsible for the synthesis of proteins in the cell. This is Large ribosomal subunit protein eL18 (RPL18) from Canis lupus familiaris (Dog).